The sequence spans 169 residues: uncharacterized protein (169 aa).

The region spanning 28–157 is the Nudix hydrolase domain; that stretch reads ELHLVVHVCI…EFIPYFFLNQ (130 aa). A Nudix box motif is present at residues 65–87; it reads AGSALKGETSRQAAEREVKEELG. 2 residues coordinate Mg(2+): Glu81 and Glu85.

This sequence belongs to the Nudix hydrolase family. Requires Mg(2+) as cofactor.

This is an uncharacterized protein from Listeria innocua serovar 6a (strain ATCC BAA-680 / CLIP 11262).